Consider the following 339-residue polypeptide: RNA 3'-terminal phosphate cyclase (339 aa).

Residues Gln-101 and 283–286 contribute to the ATP site; that span reads HMSD. His-307 functions as the Tele-AMP-histidine intermediate in the catalytic mechanism.

The protein belongs to the RNA 3'-terminal cyclase family. Type 1 subfamily.

Its subcellular location is the cytoplasm. The catalysed reaction is a 3'-end 3'-phospho-ribonucleotide-RNA + ATP = a 3'-end 2',3'-cyclophospho-ribonucleotide-RNA + AMP + diphosphate. In terms of biological role, catalyzes the conversion of 3'-phosphate to a 2',3'-cyclic phosphodiester at the end of RNA. The mechanism of action of the enzyme occurs in 3 steps: (A) adenylation of the enzyme by ATP; (B) transfer of adenylate to an RNA-N3'P to produce RNA-N3'PP5'A; (C) and attack of the adjacent 2'-hydroxyl on the 3'-phosphorus in the diester linkage to produce the cyclic end product. The biological role of this enzyme is unknown but it is likely to function in some aspects of cellular RNA processing. The polypeptide is RNA 3'-terminal phosphate cyclase (Sulfurisphaera tokodaii (strain DSM 16993 / JCM 10545 / NBRC 100140 / 7) (Sulfolobus tokodaii)).